We begin with the raw amino-acid sequence, 213 residues long: Thymidylate kinase (213 aa).

10 to 17 is an ATP binding site; sequence GLEGAGKT.

Belongs to the thymidylate kinase family.

The enzyme catalyses dTMP + ATP = dTDP + ADP. Its function is as follows. Phosphorylation of dTMP to form dTDP in both de novo and salvage pathways of dTTP synthesis. This Shigella boydii serotype 18 (strain CDC 3083-94 / BS512) protein is Thymidylate kinase.